Consider the following 318-residue polypeptide: Ribosomal RNA small subunit methyltransferase H (318 aa).

Residues 38-40, Asp-57, Leu-91, Asp-105, and Gln-112 contribute to the S-adenosyl-L-methionine site; that span reads AGH.

It belongs to the methyltransferase superfamily. RsmH family.

The protein localises to the cytoplasm. The catalysed reaction is cytidine(1402) in 16S rRNA + S-adenosyl-L-methionine = N(4)-methylcytidine(1402) in 16S rRNA + S-adenosyl-L-homocysteine + H(+). Functionally, specifically methylates the N4 position of cytidine in position 1402 (C1402) of 16S rRNA. This is Ribosomal RNA small subunit methyltransferase H from Clavibacter sepedonicus (Clavibacter michiganensis subsp. sepedonicus).